Here is a 113-residue protein sequence, read N- to C-terminus: Large ribosomal subunit protein bL19 (113 aa).

This sequence belongs to the bacterial ribosomal protein bL19 family.

In terms of biological role, this protein is located at the 30S-50S ribosomal subunit interface and may play a role in the structure and function of the aminoacyl-tRNA binding site. This chain is Large ribosomal subunit protein bL19, found in Corynebacterium diphtheriae (strain ATCC 700971 / NCTC 13129 / Biotype gravis).